A 131-amino-acid chain; its full sequence is Small ribosomal subunit protein uS8 (131 aa).

This sequence belongs to the universal ribosomal protein uS8 family. Part of the 30S ribosomal subunit. Contacts proteins S5 and S12.

In terms of biological role, one of the primary rRNA binding proteins, it binds directly to 16S rRNA central domain where it helps coordinate assembly of the platform of the 30S subunit. This chain is Small ribosomal subunit protein uS8, found in Chlorobium limicola (strain DSM 245 / NBRC 103803 / 6330).